A 604-amino-acid chain; its full sequence is Sulfite reductase [NADPH] flavoprotein alpha-component (604 aa).

Positions 66–204 (VTVLSASQTG…SANAWTDNIA (139 aa)) constitute a Flavodoxin-like domain. FMN contacts are provided by residues 72 to 77 (SQTGNA), 119 to 122 (STQG), and 155 to 164 (LGDSSYPNFC). The FAD-binding FR-type domain maps to 239 to 453 (AAPFPAALLA…VERNDGFRLP (215 aa)). Residues T327, Q361, 391-394 (RLYS), 409-411 (TVG), and 424-427 (GGAS) contribute to the FAD site. NADP(+) contacts are provided by residues 524 to 525 (SR), 530 to 534 (KIYVQ), and D566. Y604 provides a ligand contact to FAD.

The protein belongs to the NADPH-dependent sulphite reductase flavoprotein subunit CysJ family. It in the N-terminal section; belongs to the flavodoxin family. In the C-terminal section; belongs to the flavoprotein pyridine nucleotide cytochrome reductase family. In terms of assembly, alpha(8)-beta(8). The alpha component is a flavoprotein, the beta component is a hemoprotein. FAD is required as a cofactor. The cofactor is FMN.

It catalyses the reaction hydrogen sulfide + 3 NADP(+) + 3 H2O = sulfite + 3 NADPH + 4 H(+). It participates in sulfur metabolism; hydrogen sulfide biosynthesis; hydrogen sulfide from sulfite (NADPH route): step 1/1. Component of the sulfite reductase complex that catalyzes the 6-electron reduction of sulfite to sulfide. This is one of several activities required for the biosynthesis of L-cysteine from sulfate. The flavoprotein component catalyzes the electron flow from NADPH -&gt; FAD -&gt; FMN to the hemoprotein component. The sequence is that of Sulfite reductase [NADPH] flavoprotein alpha-component from Neisseria meningitidis serogroup B (strain ATCC BAA-335 / MC58).